Consider the following 361-residue polypeptide: MGGAVSAGEDNDELIDNLKEAQYIRSELVEQAFRAIDRADYYLEEFKENAYKDLAWKHGNIHLSAPCIYSEVMEALDLQPGLSFLNLGSGTGYLSSMVGLILGPFGVNHGVELHSDVTEYAKQKLDFFIRTSDSFDKFDFCEPSFVTGNCLEISPDCSQYDRVYCGAGVQKEHEEYMKSLLKVGGILVMPLEEKLTKITRTGPSAWETKKILAVSFAPLIQPCQSESGKSRLVQLPPLAVRSLQDLARIAIRGTIKKVIHQEAVNKNGNGLKNTPRFKRRRVRRRRLETIVFLDKEVFASRISNPSDDNSSGDLEEERREEEATTPPDAKPEPPVNFLREKVLSLPLPDPLKYYLLYYREK.

Gly2 is lipidated: N-myristoyl glycine. Ser64 is a catalytic residue. AdoMet binding motif stretches follow at residues Leu85–Leu94, Tyr160–Tyr164, and Leu181–Leu191. Residues Val240–Ala250 form a BC-box region. Residues Ser303–Gly312 are compositionally biased toward polar residues. Residues Ser303 to Val335 form a disordered region. Positions Leu345–Pro348 are CUL-box.

The protein belongs to the methyltransferase superfamily. L-isoaspartyl/D-aspartyl protein methyltransferase family.

The protein resides in the cytoplasm. May act as a substrate recognition component of an ECS (Elongin BC-CUL5-SOCS-box protein) E3 ubiquitin ligase complex which mediates the ubiquitination and subsequent proteasomal degradation of target proteins. May bind to the methyltransferase cofactor S-adenosylmethionine (AdoMet) via the N-terminal AdoMet binding motif, but probably does not display methyltransferase activity. In Bos taurus (Bovine), this protein is Protein-L-isoaspartate O-methyltransferase domain-containing protein 2 (PCMTD2).